Reading from the N-terminus, the 300-residue chain is ESX-5 secretion-associated protein EspG5 (300 aa).

It belongs to the EspG family. As to quaternary structure, interacts specifically with ESX-5-dependent PE/PPE proteins. Forms a 1:1:1 heterotrimeric complex with the PE25/PPE41 dimer, via PPE41. Binding of EspG5 does not cause conformational changes in the PE25/PPE41 dimer. Forms a 1:1:1 heterotrimeric complex with the PE8/PPE15 dimer, via PPE15.

The protein localises to the cytoplasm. Its function is as follows. Specific chaperone for cognate PE/PPE proteins. Plays an important role in preventing aggregation of PE/PPE dimers. This Mycobacterium tuberculosis (strain ATCC 25618 / H37Rv) protein is ESX-5 secretion-associated protein EspG5.